Reading from the N-terminus, the 422-residue chain is MKNISTKESFFKFKFNNRSLYCWGAFMKLRMKPEDFIVEEIIDFNKIAGDRCYLYKLTKRNIESLKAFSYIAKKFKIPLKDIGYCGLKDRHALTTQYISIPKKYGKLSLDEPNLKLELIGESKFLLLGDLEGNRFTITVRGLKKEDIPKIKENLKYLEFGAPNYFDSQRFGSVFDKKFIAKEVIKGNYEEAVKILLTKYKKSEKKLIKDLKRFIDKNWGDWDKIWEYIKENNIKSRLYVNMVKELKKSNDYKKALSYVDDRLKKIFVAAYQSYLWNECVKELLRKYVPEEDRVYYEYECGTLMFYKKMDEEVFNILKDKKFPTIAPDIEYSGEEKEIIEEILKREGLTMEELNNIGELGKFIYSERKILSIPKNLKIGEFEEDELNKGKYKITLSYELEKGSYATIIIKRAFLGVKTKKRKR.

Aspartate 89 serves as the catalytic Nucleophile. The TRUD domain occupies 160–371; that stretch reads GAPNYFDSQR…IYSERKILSI (212 aa).

This sequence belongs to the pseudouridine synthase TruD family.

It carries out the reaction uridine(13) in tRNA = pseudouridine(13) in tRNA. Its function is as follows. Could be responsible for synthesis of pseudouridine from uracil-13 in transfer RNAs. The sequence is that of Probable tRNA pseudouridine synthase D 2 from Methanocaldococcus jannaschii (strain ATCC 43067 / DSM 2661 / JAL-1 / JCM 10045 / NBRC 100440) (Methanococcus jannaschii).